Reading from the N-terminus, the 358-residue chain is Putative myc-like protein MYCLP1 (358 aa).

2 disordered regions span residues 150 to 171 (ACSRSESPSDSEGEEIDVTVKK) and 219 to 245 (QEGAPKRMPPKEALEREAPGGKDDKED). The span at 227-242 (PPKEALEREAPGGKDD) shows a compositional bias: basic and acidic residues. In terms of domain architecture, bHLH spans 274 to 326 (WTKKKYHSYLERKRRNDQRSRFLALRDEVPALASCSRVSKVMILVKATEYLHE).

As to quaternary structure, efficient DNA binding requires dimerization with another bHLH protein. Binds DNA as a heterodimer with MAX. In terms of tissue distribution, detected in adult testis.

It is found in the nucleus. In Homo sapiens (Human), this protein is Putative myc-like protein MYCLP1 (MYCLP1).